Reading from the N-terminus, the 246-residue chain is Predicted GPI-anchored protein 33 (246 aa).

The first 16 residues, 1 to 16 (MRGIILLSFVLTSCLA), serve as a signal peptide directing secretion. N-linked (GlcNAc...) asparagine glycosylation occurs at Asn214. Asn219 is lipidated: GPI-anchor amidated asparagine. Positions 220-246 (AAGVYSTNSVLVFVSICIGFIGGSLGI) are cleaved as a propeptide — removed in mature form.

The protein localises to the cell membrane. This Candida albicans (strain SC5314 / ATCC MYA-2876) (Yeast) protein is Predicted GPI-anchored protein 33 (PGA33).